The sequence spans 280 residues: 2-dehydro-3-deoxyphosphooctonate aldolase 2 (280 aa).

It belongs to the KdsA family.

The protein resides in the cytoplasm. The catalysed reaction is D-arabinose 5-phosphate + phosphoenolpyruvate + H2O = 3-deoxy-alpha-D-manno-2-octulosonate-8-phosphate + phosphate. It functions in the pathway carbohydrate biosynthesis; 3-deoxy-D-manno-octulosonate biosynthesis; 3-deoxy-D-manno-octulosonate from D-ribulose 5-phosphate: step 2/3. The protein operates within bacterial outer membrane biogenesis; lipopolysaccharide biosynthesis. The protein is 2-dehydro-3-deoxyphosphooctonate aldolase 2 (kdsA2) of Pseudomonas putida (strain ATCC 47054 / DSM 6125 / CFBP 8728 / NCIMB 11950 / KT2440).